Here is a 504-residue protein sequence, read N- to C-terminus: Peptidyl-prolyl cis-trans isomerase-like 4 (504 aa).

The 169-residue stretch at 1-169 folds into the PPIase cyclophilin-type domain; it reads MSVMLETSLG…QNIRIRHVEI (169 aa). The RRM domain maps to 246 to 324; sequence NILFVCKLNP…RRIWVDFSQS (79 aa). The segment covering 330 to 339 has biased composition (polar residues); it reads RSMLSSSNPT. Residues 330-504 are disordered; the sequence is RSMLSSSNPT…RERDDRDRRR (175 aa). The segment covering 340–354 has biased composition (gly residues); sequence GRGGRGGRGGRGGNY. Composition is skewed to basic and acidic residues over residues 356–381 and 416–504; these read GRRDGDRDRDRDSGWSSRRDAPDSRR and SKRD…DRRR.

Belongs to the cyclophilin-type PPIase family. PPIL4 subfamily.

Its subcellular location is the nucleus. It carries out the reaction [protein]-peptidylproline (omega=180) = [protein]-peptidylproline (omega=0). Functionally, PPIases accelerate the folding of proteins. It catalyzes the cis-trans isomerization of proline imidic peptide bonds in oligopeptides. This Cryptococcus neoformans var. neoformans serotype D (strain B-3501A) (Filobasidiella neoformans) protein is Peptidyl-prolyl cis-trans isomerase-like 4 (CYP6).